The primary structure comprises 413 residues: Serine/threonine-protein kinase ppk27 (413 aa).

The Protein kinase domain maps to 102-403 (WSINTKITST…LKDFNKHGNF (302 aa)). Residues 108 to 116 (ITSTEQREV) and Lys-133 each bind ATP. Residue Asp-231 is the Proton acceptor of the active site.

Belongs to the protein kinase superfamily. Ser/Thr protein kinase family.

The protein localises to the cytoplasm. The enzyme catalyses L-seryl-[protein] + ATP = O-phospho-L-seryl-[protein] + ADP + H(+). It carries out the reaction L-threonyl-[protein] + ATP = O-phospho-L-threonyl-[protein] + ADP + H(+). The polypeptide is Serine/threonine-protein kinase ppk27 (ppk27) (Schizosaccharomyces pombe (strain 972 / ATCC 24843) (Fission yeast)).